Reading from the N-terminus, the 391-residue chain is 8-amino-7-oxononanoate synthase (391 aa).

Position 24 (arginine 24) interacts with substrate. A pyridoxal 5'-phosphate-binding site is contributed by 112–113 (GY). Histidine 137 contacts substrate. Positions 183, 211, and 240 each coordinate pyridoxal 5'-phosphate. Lysine 243 carries the post-translational modification N6-(pyridoxal phosphate)lysine. Threonine 357 contributes to the substrate binding site.

The protein belongs to the class-II pyridoxal-phosphate-dependent aminotransferase family. BioF subfamily. Homodimer. Pyridoxal 5'-phosphate serves as cofactor.

The enzyme catalyses 6-carboxyhexanoyl-[ACP] + L-alanine + H(+) = (8S)-8-amino-7-oxononanoate + holo-[ACP] + CO2. The protein operates within cofactor biosynthesis; biotin biosynthesis. Catalyzes the decarboxylative condensation of pimeloyl-[acyl-carrier protein] and L-alanine to produce 8-amino-7-oxononanoate (AON), [acyl-carrier protein], and carbon dioxide. This Alkalilimnicola ehrlichii (strain ATCC BAA-1101 / DSM 17681 / MLHE-1) protein is 8-amino-7-oxononanoate synthase.